Consider the following 563-residue polypeptide: Type 2 DNA topoisomerase 6 subunit B (563 aa).

ATP is bound by residues Asn-46, Asp-78, 99-100, 109-116, and Lys-471; these read TK and GQQGIGIS.

The protein belongs to the TOP6B family. In terms of assembly, homodimer. Heterotetramer of two Top6A and two Top6B chains.

It carries out the reaction ATP-dependent breakage, passage and rejoining of double-stranded DNA.. In terms of biological role, relaxes both positive and negative superturns and exhibits a strong decatenase activity. This chain is Type 2 DNA topoisomerase 6 subunit B, found in Thermococcus onnurineus (strain NA1).